The sequence spans 604 residues: Serine/threonine-protein phosphatase 2B catalytic subunit A2 (604 aa).

The tract at residues 21–48 (NKTERPQSSTTPIDSKASTVAAANSTAT) is disordered. At Thr-31 the chain carries Phosphothreonine. Low complexity predominate over residues 35–48 (SKASTVAAANSTAT). The Fe cation site is built by Asp-144, His-146, and Asp-172. Positions 172 and 204 each coordinate Zn(2+). Catalysis depends on His-205, which acts as the Proton donor. Positions 253 and 359 each coordinate Zn(2+). The disordered stretch occupies residues 470 to 497 (KKLPQAGKSEATPQPATSASPKHASILD). The segment covering 480–489 (ATPQPATSAS) has biased composition (polar residues). A phosphoserine mark is found at Ser-489 and Ser-520. The calmodulin-binding stretch occupies residues 501 to 523 (RRKALRNKILAVAKVSRMYSVLR).

This sequence belongs to the PPP phosphatase family. PP-2B subfamily. In terms of assembly, composed of two components (A and B), the A component is the catalytic subunit and the B component confers calcium sensitivity. Requires Fe(3+) as cofactor. The cofactor is Zn(2+).

It catalyses the reaction O-phospho-L-seryl-[protein] + H2O = L-seryl-[protein] + phosphate. The enzyme catalyses O-phospho-L-threonyl-[protein] + H2O = L-threonyl-[protein] + phosphate. In terms of biological role, calcium-dependent, calmodulin-stimulated protein phosphatase. This subunit may have a role in the calmodulin activation of calcineurin. This Saccharomyces cerevisiae (strain ATCC 204508 / S288c) (Baker's yeast) protein is Serine/threonine-protein phosphatase 2B catalytic subunit A2 (CMP2).